The primary structure comprises 309 residues: MEQLLRAELRTATLRAFGGPGAGCISEGRAYDTDAGPVFVKVNRRTQARQMFEGEVASLEALRSTGLVRVPRPMKVIDLPGGGAAFVMEHLKMKSLSSQASKLGEQMADLHLYNQKLREKLKEEENTVGRRGEGAEPQYVDKFGFHTVTCCGFIPQVNEWQDDWPTFFARHRLQAQLDLIEKDYADREARELWSRLQVKIPDLFCGLEIVPALLHGDLWSGNVAEDDVGPIIYDPASFYGHSEFELAIALMFGGFPRSFFTAYHRKIPKAPGFDQRLLLYQLFNYLNHWNHFGREYRSPSLGTMRRLLK.

At Met1 the chain carries N-acetylmethionine. Residue 89–91 (EHL) participates in ATP binding. Asp217 serves as the catalytic Proton acceptor.

Belongs to the fructosamine kinase family. Monomer. In terms of tissue distribution, widely expressed. Expressed in erythrocytes.

It carries out the reaction N(6)-(D-fructosyl)-L-lysyl-[protein] + ATP = N(6)-(3-O-phospho-D-fructosyl)-L-lysyl-[protein] + ADP + H(+). The catalysed reaction is N(6)-D-ribulosyl-L-lysyl-[protein] + ATP = N(6)-(3-O-phospho-D-ribulosyl)-L-lysyl-[protein] + ADP + H(+). The enzyme catalyses N(6)-(D-psicosyl)-L-lysyl-[protein] + ATP = N(6)-(3-O-phospho-D-psicosyl)-L-lysyl-[protein] + ADP + H(+). Functionally, fructosamine-3-kinase involved in protein deglycation by mediating phosphorylation of fructoselysine residues on glycated proteins, to generate fructoselysine-3 phosphate. Fructoselysine-3 phosphate adducts are unstable and decompose under physiological conditions. Involved in intracellular deglycation in erythrocytes. Involved in the response to oxidative stress by mediating deglycation of NFE2L2/NRF2, glycation impairing NFE2L2/NRF2 function. Also able to phosphorylate psicosamines and ribulosamines. The sequence is that of Fructosamine-3-kinase from Homo sapiens (Human).